The chain runs to 146 residues: Hemoglobin subunit beta (146 aa).

Residue Val1 is modified to N-acetylvaline. The Globin domain maps to 2 to 146 (HLTGEEKSAV…VANALAHKYH (145 aa)). Phosphothreonine is present on Thr12. A Phosphoserine modification is found at Ser44. At Lys59 the chain carries N6-acetyllysine. His63 contacts heme b. Lys82 bears the N6-acetyllysine mark. Heme b is bound at residue His92. Cys93 is subject to S-nitrosocysteine. Lys144 carries the post-translational modification N6-acetyllysine.

This sequence belongs to the globin family. In terms of assembly, heterotetramer of two alpha chains and two beta chains. As to expression, red blood cells.

Involved in oxygen transport from the lung to the various peripheral tissues. This is Hemoglobin subunit beta (HBB) from Saguinus mystax (Moustached tamarin).